Consider the following 271-residue polypeptide: UPF0758 protein ACIAD3126 (271 aa).

The 123-residue stretch at 120 to 242 folds into the MPN domain; it reads NLNSSRLVLD…TFSFAERALL (123 aa). The Zn(2+) site is built by H191, H193, and D204. The JAMM motif signature appears at 191-204; the sequence is HNHPFGKAEPSAAD.

This sequence belongs to the UPF0758 family.

This Acinetobacter baylyi (strain ATCC 33305 / BD413 / ADP1) protein is UPF0758 protein ACIAD3126.